We begin with the raw amino-acid sequence, 297 residues long: Protein-methionine-sulfoxide reductase catalytic subunit MsrP (297 aa).

Residues 1–35 (MLITPEKLYKQRRNFLKLGAGALISSSVLASKLSA) constitute a signal peptide (tat-type signal). Mo-molybdopterin is bound by residues 62–63 (YE), Cys116, Thr151, Asn201, Arg206, and 217–219 (SIK).

Belongs to the MsrP family. As to quaternary structure, heterodimer of a catalytic subunit (MsrP) and a heme-binding subunit (MsrQ). It depends on Mo-molybdopterin as a cofactor. In terms of processing, predicted to be exported by the Tat system. The position of the signal peptide cleavage has not been experimentally proven.

Its subcellular location is the periplasm. The catalysed reaction is L-methionyl-[protein] + a quinone + H2O = L-methionyl-(S)-S-oxide-[protein] + a quinol. It carries out the reaction L-methionyl-[protein] + a quinone + H2O = L-methionyl-(R)-S-oxide-[protein] + a quinol. Its function is as follows. Part of the MsrPQ system that repairs oxidized periplasmic proteins containing methionine sulfoxide residues (Met-O), using respiratory chain electrons. Thus protects these proteins from oxidative-stress damage caused by reactive species of oxygen and chlorine generated by the host defense mechanisms. MsrPQ is essential for the maintenance of envelope integrity under bleach stress, rescuing a wide series of structurally unrelated periplasmic proteins from methionine oxidation. The catalytic subunit MsrP is non-stereospecific, being able to reduce both (R-) and (S-) diastereoisomers of methionine sulfoxide. This chain is Protein-methionine-sulfoxide reductase catalytic subunit MsrP, found in Campylobacter jejuni subsp. jejuni serotype O:2 (strain ATCC 700819 / NCTC 11168).